Reading from the N-terminus, the 86-residue chain is uncharacterized protein (86 aa).

This is an uncharacterized protein from Dictyostelium discoideum (Social amoeba).